The sequence spans 716 residues: MEFKYSTLIDPEMYETEGLCDGIPVRYHNNPELEEIDCLRCHEHWRENVGPLGVYKGGLADQWNGISIAIPEALPDRLGVVSYASEFAFVHDDVIDIAQHGNEQNDDLRVGFEQMIDAGAIKYSTSGKRALQSYIAKRMLSIDRERAIISLRAWLEFIEKTGRQEERRFNNEKEFLKYRIYDVGMLFWYGLLTFAQKITIPENELTTCHELAIPAYRHMALLNDLVSWEKERASSIALGKDYCINFIFVAMEESGISEDEAKERCREEIKLATVDYLRVFDEAKDRIDLSHDTMLYLESLLYSMSGNVVWGLQSPRYYTDAKFSQRQLDWIKNGLPLEVRLEDRVFGLSPSEDRVTHQAVIENGLPESGLGKNGNSSNGVDVNKALLSAVLHEHLKGHAVFKMSDHEVKVKASNGRSLDTKVLQAPYEYITGLPSKRLREQAIDAMNVWFRVPAEKLDLIKSITTILHNASLMLDDVEDGSELRRGNPSTHTIFGLSQTINSANYQLVRALERVQKLEDSESLLVFTEELRNLYIGQSMDLYWTGNLICPTMNEYFHMVECKTGGLFRLFTRLMSLHSTSAVKVDPTTLSTRLGIYFQTRDDYKNLVSTEYTKQKGYCEDLEEGKFSLPLIHLIQAMPDNHVLRNILTQWRVTRKVTLAQKQVVLGLMEKSGSLKFTRETLASLYSGLEKSFTELEEKFGTENFQLKLILQFLRTE.

The terpene cyclase stretch occupies residues 1-323; sequence MEFKYSTLID…SPRYYTDAKF (323 aa). Asp92 serves as a coordination point for Mg(2+). Residues Asp92, 179–182, Asn223, 227–231, and 316–317 contribute to the substrate site; these read RIYD, SWEKE, and RY. The DDXXD 1 signature appears at 92–96; the sequence is DDVID. The NSE/DTE motif lies at 223–231; that stretch reads NDLVSWEKE. Positions 324–713 are prenyltransferase; sequence SQRQLDWIKN…FQLKLILQFL (390 aa). Isopentenyl diphosphate-binding residues include Lys436, Arg439, and His468. The Mg(2+) site is built by Asp475 and Asp479. Residues 475–479 carry the DDXXD 2 motif; sequence DDVED. Arg484 is a dimethylallyl diphosphate binding site. Isopentenyl diphosphate is bound at residue Arg485. Lys562, Thr563, Gln598, Asn605, Lys615, and Lys625 together coordinate dimethylallyl diphosphate.

In the N-terminal section; belongs to the terpene synthase family. It in the C-terminal section; belongs to the FPP/GGPP synthase family. As to quaternary structure, hexamer. The cofactor is Mg(2+).

The enzyme catalyses isopentenyl diphosphate + (2E,6E)-farnesyl diphosphate = (2E,6E,10E)-geranylgeranyl diphosphate + diphosphate. The catalysed reaction is isopentenyl diphosphate + (2E,6E,10E)-geranylgeranyl diphosphate = (2E,6E,10E,14E)-geranylfarnesyl diphosphate + diphosphate. It catalyses the reaction (2E,6E,10E,14E)-geranylfarnesyl diphosphate = astellifadiene + diphosphate. It participates in secondary metabolite biosynthesis; terpenoid biosynthesis. Its function is as follows. Bifunctional terpene synthase that converts dimethylallyl diphosphate (DMAPP) and isopentenyl diphosphate (IPP) into astellifadiene. The C-terminal prenyltransferase (PT) domain of EvAS catalyzes formation of geranylfarnesyl pyrophosphate (GFPP), whereas the N-terminal terpene cyclase (TC) domain catalyzes the cyclization of GFPP to astellifadiene. In Emericella variicolor (Aspergillus stellatus), this protein is Astellifadiene synthase.